A 616-amino-acid chain; its full sequence is DEAD-box ATP-dependent RNA helicase 53, mitochondrial (616 aa).

Residues 1 to 81 constitute a mitochondrion transit peptide; the sequence is MITTVLRRSL…DFRASMVSQA (81 aa). A Q motif motif is present at residues 104 to 132; that stretch reads LAISELGISPEIVKALSSKGIEKLFPIQK. A Helicase ATP-binding domain is found at 135–309; sequence LEPAMEGRDM…KKYLNNPLTV (175 aa). 148-155 contributes to the ATP binding site; it reads ARTGTGKT. A DEAD box motif is present at residues 257 to 260; the sequence is DEAD. One can recognise a Helicase C-terminal domain in the interval 338-482; that stretch reads IIGPLVTEHA…ELPSIAVERG (145 aa). A disordered region spans residues 489–616; it reads GIGSRSGGSF…FGSNDGKRSY (128 aa). 2 stretches are compositionally biased toward gly residues: residues 492-501 and 508-531; these read SRSGGSFGGG and SFGG…GRSG. Composition is skewed to low complexity over residues 532-568 and 578-587; these read GSSN…SGGR and GSSNNRSSGF.

The protein belongs to the DEAD box helicase family. DDX21/DDX50 subfamily.

The protein resides in the mitochondrion. It carries out the reaction ATP + H2O = ADP + phosphate + H(+). This chain is DEAD-box ATP-dependent RNA helicase 53, mitochondrial (RH53), found in Arabidopsis thaliana (Mouse-ear cress).